We begin with the raw amino-acid sequence, 389 residues long: 5-amino-6-(D-ribitylamino)uracil--L-tyrosine 4-hydroxyphenyl transferase (389 aa).

In terms of domain architecture, Radical SAM core spans 56–298 (VSYVINRNIN…QAVARLFFGR (243 aa)). Residues Cys-70, Cys-74, and Cys-77 each contribute to the [4Fe-4S] cluster site.

The protein belongs to the radical SAM superfamily. CofH family. In terms of assembly, consists of two subunits, CofG and CofH. [4Fe-4S] cluster serves as cofactor.

The catalysed reaction is 5-amino-6-(D-ribitylamino)uracil + L-tyrosine + S-adenosyl-L-methionine = 5-amino-5-(4-hydroxybenzyl)-6-(D-ribitylimino)-5,6-dihydrouracil + 2-iminoacetate + 5'-deoxyadenosine + L-methionine + H(+). It participates in cofactor biosynthesis; coenzyme F0 biosynthesis. Catalyzes the radical-mediated synthesis of 5-amino-5-(4-hydroxybenzyl)-6-(D-ribitylimino)-5,6-dihydrouracil from 5-amino-6-(D-ribitylamino)uracil and L-tyrosine. This is 5-amino-6-(D-ribitylamino)uracil--L-tyrosine 4-hydroxyphenyl transferase from Gloeobacter violaceus (strain ATCC 29082 / PCC 7421).